Consider the following 357-residue polypeptide: DnaJ homolog subfamily C member 25 (357 aa).

Residues 19 to 39 (WLLLAPLLLVPLLVRPAEALV) form a helical membrane-spanning segment. Residues 48–121 (DCYEVLGVSR…ETRKDYDYML (74 aa)) form the J domain. The next 2 helical transmembrane spans lie at 147–167 (VVIL…WWNS) and 241–261 (LLLF…AWYC).

Belongs to the DNAJC25 family.

It is found in the membrane. In Rattus norvegicus (Rat), this protein is DnaJ homolog subfamily C member 25 (Dnajc25).